Consider the following 558-residue polypeptide: DEAD-box ATP-dependent RNA helicase 49 (558 aa).

Positions 16–44 (FSELKPPLSEDIIEALDRSGFEVCTPVQA) match the Q motif motif. The 180-residue stretch at 47-226 (IPFLCSHKDV…KAGLRNAMEV (180 aa)) folds into the Helicase ATP-binding domain. Position 60–67 (60–67 (AATGSGKT)) interacts with ATP. A DEAD box motif is present at residues 174–177 (DEAD). One can recognise a Helicase C-terminal domain in the interval 255–402 (QLVHLLIENK…ERKCSENASD (148 aa)). Positions 506–558 (KDKLQQEKRGKRKKSSKEAVDDSNKASRKRKLTGRQRQTIQTAQDEEEMNLRL) are disordered. Basic and acidic residues predominate over residues 521–530 (SKEAVDDSNK). Over residues 549 to 558 (QDEEEMNLRL) the composition is skewed to acidic residues.

It belongs to the DEAD box helicase family. DDX55/SPB4 subfamily.

It catalyses the reaction ATP + H2O = ADP + phosphate + H(+). The chain is DEAD-box ATP-dependent RNA helicase 49 (RH49) from Arabidopsis thaliana (Mouse-ear cress).